We begin with the raw amino-acid sequence, 249 residues long: 4-hydroxy-tetrahydrodipicolinate reductase (249 aa).

NAD(+) is bound by residues aspartate 32, 74–76 (GTT), and 99–102 (SANY). Histidine 134 functions as the Proton donor/acceptor in the catalytic mechanism. Histidine 135 contacts (S)-2,3,4,5-tetrahydrodipicolinate. Lysine 138 functions as the Proton donor in the catalytic mechanism. A (S)-2,3,4,5-tetrahydrodipicolinate-binding site is contributed by 144–145 (GT).

The protein belongs to the DapB family.

It localises to the cytoplasm. The catalysed reaction is (S)-2,3,4,5-tetrahydrodipicolinate + NAD(+) + H2O = (2S,4S)-4-hydroxy-2,3,4,5-tetrahydrodipicolinate + NADH + H(+). The enzyme catalyses (S)-2,3,4,5-tetrahydrodipicolinate + NADP(+) + H2O = (2S,4S)-4-hydroxy-2,3,4,5-tetrahydrodipicolinate + NADPH + H(+). It functions in the pathway amino-acid biosynthesis; L-lysine biosynthesis via DAP pathway; (S)-tetrahydrodipicolinate from L-aspartate: step 4/4. Functionally, catalyzes the conversion of 4-hydroxy-tetrahydrodipicolinate (HTPA) to tetrahydrodipicolinate. This is 4-hydroxy-tetrahydrodipicolinate reductase from Chlorobaculum tepidum (strain ATCC 49652 / DSM 12025 / NBRC 103806 / TLS) (Chlorobium tepidum).